Consider the following 431-residue polypeptide: Glutamyl-tRNA(Gln) amidotransferase subunit A (431 aa).

Catalysis depends on charge relay system residues K55 and S130. S154 (acyl-ester intermediate) is an active-site residue.

The protein belongs to the amidase family. GatA subfamily. In terms of assembly, heterotrimer of A, B and C subunits.

It carries out the reaction L-glutamyl-tRNA(Gln) + L-glutamine + ATP + H2O = L-glutaminyl-tRNA(Gln) + L-glutamate + ADP + phosphate + H(+). Functionally, allows the formation of correctly charged Gln-tRNA(Gln) through the transamidation of misacylated Glu-tRNA(Gln) in organisms which lack glutaminyl-tRNA synthetase. The reaction takes place in the presence of glutamine and ATP through an activated gamma-phospho-Glu-tRNA(Gln). The chain is Glutamyl-tRNA(Gln) amidotransferase subunit A from Methanococcus maripaludis (strain DSM 14266 / JCM 13030 / NBRC 101832 / S2 / LL).